Here is a 213-residue protein sequence, read N- to C-terminus: Putative manganese efflux pump MntP (213 aa).

6 helical membrane-spanning segments follow: residues 3 to 23, 36 to 56, 67 to 87, 130 to 150, 152 to 172, and 187 to 207; these read ILSI…VSVA, ALKV…IGWG, AFDH…MIFE, LAIA…FLGI, IVQT…LGVI, and IVGG…HTGI.

It belongs to the MntP (TC 9.B.29) family.

Its subcellular location is the cell membrane. Functionally, probably functions as a manganese efflux pump. In Clostridium perfringens (strain SM101 / Type A), this protein is Putative manganese efflux pump MntP.